The sequence spans 206 residues: HTH-type transcriptional regulator BetI (206 aa).

One can recognise an HTH tetR-type domain in the interval 8 to 68; it reads PLRRKALVDA…ETIRSLLRDL (61 aa). Positions 31–50 form a DNA-binding region, H-T-H motif; that stretch reads TMSDIAREAGVSAALAHHYF.

It functions in the pathway amine and polyamine biosynthesis; betaine biosynthesis via choline pathway [regulation]. Functionally, repressor involved in the biosynthesis of the osmoprotectant glycine betaine. It represses transcription of the choline transporter BetT and the genes of BetAB involved in the synthesis of glycine betaine. This chain is HTH-type transcriptional regulator BetI, found in Agrobacterium fabrum (strain C58 / ATCC 33970) (Agrobacterium tumefaciens (strain C58)).